The primary structure comprises 230 residues: Protein UPS2, mitochondrial (230 aa).

The region spanning 1–175 is the PRELI/MSF1 domain; sequence MKLFQNSYDF…VLQVFSENWE (175 aa).

Belongs to the slowmo family. As to quaternary structure, interacts with MDM35.

It is found in the mitochondrion inner membrane. Its subcellular location is the mitochondrion intermembrane space. Functionally, required for mitochondrial cristae morphogenesis and MGM1-processing. Controls the stability of mitochondrial phosphatidylethanolamine (PE). With UPS1, controls the level of cardiolipin in mitochondria. Cardiolipin is a unique phospholipid with four fatty acid chains and is present mainly in the mitochondrial inner membrane where it stabilizes the electron transport chain supercomplex between complexes III and IV through direct interaction of their subunits. This chain is Protein UPS2, mitochondrial (UPS2), found in Saccharomyces cerevisiae (strain ATCC 204508 / S288c) (Baker's yeast).